The sequence spans 649 residues: Threonine--tRNA ligase (649 aa).

One can recognise a TGS domain in the interval 1 to 63; that stretch reads MSSIKITFPD…KEDGSIEIIT (63 aa). Residues 245-543 are catalytic; that stretch reads DHRVIGNELD…LTEMYKGAFP (299 aa). Residues cysteine 339, histidine 390, and histidine 520 each contribute to the Zn(2+) site.

Belongs to the class-II aminoacyl-tRNA synthetase family. In terms of assembly, homodimer. Requires Zn(2+) as cofactor.

It is found in the cytoplasm. The catalysed reaction is tRNA(Thr) + L-threonine + ATP = L-threonyl-tRNA(Thr) + AMP + diphosphate + H(+). Functionally, catalyzes the attachment of threonine to tRNA(Thr) in a two-step reaction: L-threonine is first activated by ATP to form Thr-AMP and then transferred to the acceptor end of tRNA(Thr). Also edits incorrectly charged L-seryl-tRNA(Thr). The chain is Threonine--tRNA ligase from Ligilactobacillus salivarius (strain UCC118) (Lactobacillus salivarius).